Here is a 371-residue protein sequence, read N- to C-terminus: N-acetyldiaminopimelate deacetylase (371 aa).

D68 is an active-site residue. The Proton acceptor role is filled by E127.

Belongs to the peptidase M20A family. N-acetyldiaminopimelate deacetylase subfamily.

It carries out the reaction N-acetyl-(2S,6S)-2,6-diaminopimelate + H2O = (2S,6S)-2,6-diaminopimelate + acetate. It functions in the pathway amino-acid biosynthesis; L-lysine biosynthesis via DAP pathway; LL-2,6-diaminopimelate from (S)-tetrahydrodipicolinate (acetylase route): step 3/3. Catalyzes the conversion of N-acetyl-diaminopimelate to diaminopimelate and acetate. The protein is N-acetyldiaminopimelate deacetylase of Listeria monocytogenes serotype 4b (strain CLIP80459).